The primary structure comprises 55 residues: Transcriptional regulator CdrS (55 aa).

The protein belongs to the CdrS family.

It localises to the cytoplasm. In terms of biological role, transcriptional regulator which plays a central role in the regulation of cell division. Activates the expression of the gene encoding the cell division protein FtsZ2, and of other genes encoding proteins predicted to function in critical aspects of cell division. Required for normal cell division but not for cell elongation. May act during the transition from stasis to growth. The CdrSL-FtsZ2 transcriptional network might coordinate cell division timing with cell growth. The polypeptide is Transcriptional regulator CdrS (Halobacterium salinarum (strain ATCC 700922 / JCM 11081 / NRC-1) (Halobacterium halobium)).